The primary structure comprises 206 residues: LexA repressor (206 aa).

A DNA-binding region (H-T-H motif) is located at residues 28-48; that stretch reads RAEIARRLGFKSANAAEEHLK. Residues serine 123 and lysine 160 each act as for autocatalytic cleavage activity in the active site.

It belongs to the peptidase S24 family. In terms of assembly, homodimer.

It carries out the reaction Hydrolysis of Ala-|-Gly bond in repressor LexA.. Represses a number of genes involved in the response to DNA damage (SOS response), including recA and lexA. In the presence of single-stranded DNA, RecA interacts with LexA causing an autocatalytic cleavage which disrupts the DNA-binding part of LexA, leading to derepression of the SOS regulon and eventually DNA repair. This chain is LexA repressor, found in Shewanella pealeana (strain ATCC 700345 / ANG-SQ1).